The following is a 340-amino-acid chain: COP9 signalosome complex subunit 5 (340 aa).

Residues 52-189 (VRISATALIK…IGAFRTYPAD (138 aa)) enclose the MPN domain. Zn(2+)-binding residues include His135, His137, and Asp148. Residues 135 to 148 (HSHPGYGCWLSGID) carry the JAMM motif motif.

Belongs to the peptidase M67A family. CSN5 subfamily. As to quaternary structure, component of the COP9 signalosome (CSN) complex.

Its subcellular location is the cytoplasm. It is found in the nucleus. In terms of biological role, catalytic Component of the COP9 signalosome (CSN) complex that acts as an regulator of the ubiquitin (Ubl) conjugation pathway by mediating the deneddylation of the cullin subunit of SCF-type E3 ubiquitin-protein ligase complexes. The sequence is that of COP9 signalosome complex subunit 5 (RRI1) from Gibberella zeae (strain ATCC MYA-4620 / CBS 123657 / FGSC 9075 / NRRL 31084 / PH-1) (Wheat head blight fungus).